We begin with the raw amino-acid sequence, 115 residues long: T cell receptor beta variable 2 (115 aa).

Positions 1–19 (MDTWLVCWAIFSLLKAGLT) are cleaved as a signal peptide. The 95-residue stretch at 21 to 115 (PEVTQTPSHQ…SAMYFCASSE (95 aa)) folds into the Ig-like domain. Cys-42 and Cys-111 are joined by a disulfide. An N-linked (GlcNAc...) asparagine glycan is attached at Asn-93.

Alpha-beta TR is a heterodimer composed of an alpha and beta chain; disulfide-linked. The alpha-beta TR is associated with the transmembrane signaling CD3 coreceptor proteins to form the TR-CD3 (TcR or TCR). The assembly of alpha-beta TR heterodimers with CD3 occurs in the endoplasmic reticulum where a single alpha-beta TR heterodimer associates with one CD3D-CD3E heterodimer, one CD3G-CD3E heterodimer and one CD247 homodimer forming a stable octameric structure. CD3D-CD3E and CD3G-CD3E heterodimers preferentially associate with TR alpha and TR beta chains, respectively. The association of the CD247 homodimer is the last step of TcR assembly in the endoplasmic reticulum and is required for transport to the cell surface.

It is found in the cell membrane. Functionally, v region of the variable domain of T cell receptor (TR) beta chain that participates in the antigen recognition. Alpha-beta T cell receptors are antigen specific receptors which are essential to the immune response and are present on the cell surface of T lymphocytes. Recognize peptide-major histocompatibility (MH) (pMH) complexes that are displayed by antigen presenting cells (APC), a prerequisite for efficient T cell adaptive immunity against pathogens. Binding of alpha-beta TR to pMH complex initiates TR-CD3 clustering on the cell surface and intracellular activation of LCK that phosphorylates the ITAM motifs of CD3G, CD3D, CD3E and CD247 enabling the recruitment of ZAP70. In turn ZAP70 phosphorylates LAT, which recruits numerous signaling molecules to form the LAT signalosome. The LAT signalosome propagates signal branching to three major signaling pathways, the calcium, the mitogen-activated protein kinase (MAPK) kinase and the nuclear factor NF-kappa-B (NF-kB) pathways, leading to the mobilization of transcription factors that are critical for gene expression and essential for T cell growth and differentiation. The T cell repertoire is generated in the thymus, by V-(D)-J rearrangement. This repertoire is then shaped by intrathymic selection events to generate a peripheral T cell pool of self-MH restricted, non-autoaggressive T cells. Post-thymic interaction of alpha-beta TR with the pMH complexes shapes TR structural and functional avidity. This is T cell receptor beta variable 2 from Homo sapiens (Human).